The sequence spans 141 residues: Hemoglobin subunit alpha-D (141 aa).

The region spanning 1–141 (MLTEDEKQLI…VSAVLAEKYR (141 aa)) is the Globin domain. Heme b contacts are provided by H58 and H87.

Belongs to the globin family. Heterotetramer of two alpha-D chains and two beta chains. As to expression, red blood cells.

In terms of biological role, involved in oxygen transport from the lung to the various peripheral tissues. This chain is Hemoglobin subunit alpha-D (HBAD), found in Chelonoidis carbonarius (Red-footed tortoise).